Consider the following 74-residue polypeptide: MGSMSWIHWVIVLGIVALLFGGRGKLSSIMGDAAKGIKAFKDGLKDESSSEVADNKAKSALPRTEAEAEELRKS.

Residues 1 to 21 (MGSMSWIHWVIVLGIVALLFG) form a helical membrane-spanning segment. The segment at 51 to 74 (EVADNKAKSALPRTEAEAEELRKS) is disordered. Residues 64-74 (TEAEAEELRKS) are compositionally biased toward basic and acidic residues.

The protein belongs to the TatA/E family. The Tat system comprises two distinct complexes: a TatABC complex, containing multiple copies of TatA, TatB and TatC subunits, and a separate TatA complex, containing only TatA subunits. Substrates initially bind to the TatABC complex, which probably triggers association of the separate TatA complex to form the active translocon.

Its subcellular location is the cell inner membrane. Its function is as follows. Part of the twin-arginine translocation (Tat) system that transports large folded proteins containing a characteristic twin-arginine motif in their signal peptide across membranes. TatA could form the protein-conducting channel of the Tat system. In Caulobacter vibrioides (strain ATCC 19089 / CIP 103742 / CB 15) (Caulobacter crescentus), this protein is Sec-independent protein translocase protein TatA.